A 447-amino-acid chain; its full sequence is Glycylpeptide N-tetradecanoyltransferase (447 aa).

Residues 38 to 41 (YKFW), 171 to 173 (LCV), and 179 to 183 (SKRLA) contribute to the tetradecanoyl-CoA site. Leucine 447 acts as the Proton acceptor; via carboxylate in catalysis.

It belongs to the NMT family. In terms of assembly, monomer.

The protein resides in the cytoplasm. The enzyme catalyses N-terminal glycyl-[protein] + tetradecanoyl-CoA = N-tetradecanoylglycyl-[protein] + CoA + H(+). Functionally, adds a myristoyl group to the N-terminal glycine residue of certain cellular proteins. The protein is Glycylpeptide N-tetradecanoyltransferase (NMT1) of Kluyveromyces lactis (strain ATCC 8585 / CBS 2359 / DSM 70799 / NBRC 1267 / NRRL Y-1140 / WM37) (Yeast).